We begin with the raw amino-acid sequence, 302 residues long: Phosphoribosylaminoimidazole-succinocarboxamide synthase (302 aa).

The protein belongs to the SAICAR synthetase family.

It carries out the reaction 5-amino-1-(5-phospho-D-ribosyl)imidazole-4-carboxylate + L-aspartate + ATP = (2S)-2-[5-amino-1-(5-phospho-beta-D-ribosyl)imidazole-4-carboxamido]succinate + ADP + phosphate + 2 H(+). Its pathway is purine metabolism; IMP biosynthesis via de novo pathway; 5-amino-1-(5-phospho-D-ribosyl)imidazole-4-carboxamide from 5-amino-1-(5-phospho-D-ribosyl)imidazole-4-carboxylate: step 1/2. The sequence is that of Phosphoribosylaminoimidazole-succinocarboxamide synthase from Cupriavidus necator (strain ATCC 17699 / DSM 428 / KCTC 22496 / NCIMB 10442 / H16 / Stanier 337) (Ralstonia eutropha).